The following is a 221-amino-acid chain: 7-cyano-7-deazaguanine synthase (221 aa).

7 to 17 contributes to the ATP binding site; it reads LSGGMDSTTLL. The Zn(2+) site is built by cysteine 183, cysteine 191, cysteine 194, and cysteine 197.

It belongs to the QueC family. Homodimer. Zn(2+) serves as cofactor.

The enzyme catalyses 7-carboxy-7-deazaguanine + NH4(+) + ATP = 7-cyano-7-deazaguanine + ADP + phosphate + H2O + H(+). It participates in purine metabolism; 7-cyano-7-deazaguanine biosynthesis. Its function is as follows. Catalyzes the ATP-dependent conversion of 7-carboxy-7-deazaguanine (CDG) to 7-cyano-7-deazaguanine (preQ(0)). In Caldicellulosiruptor bescii (strain ATCC BAA-1888 / DSM 6725 / KCTC 15123 / Z-1320) (Anaerocellum thermophilum), this protein is 7-cyano-7-deazaguanine synthase.